A 439-amino-acid chain; its full sequence is Membrane sensor protein UhpC (439 aa).

Residues 1-25 are Cytoplasmic-facing; it reads MLPFLKAPADAPLMTDKYEIDARYR. Residues 26-45 form a helical membrane-spanning segment; sequence YWRRHILLTIWLGYALFYFT. At 46-66 the chain is on the periplasmic side; it reads RKSFNAAVPEILANGVLSRSD. The helical transmembrane segment at 67 to 87 threads the bilayer; the sequence is IGLLATLFYITYGVSKFVSGI. The Cytoplasmic segment spans residues 88 to 95; it reads VSDRSNAR. A helical membrane pass occupies residues 96–118; it reads YFMGIGLIATGIINILFGFSTSL. Over 119–121 the chain is Periplasmic; that stretch reads WAF. A helical membrane pass occupies residues 122–144; sequence AVLWVLNAFFQGWGSPVCARLLT. At 145-162 the chain is on the cytoplasmic side; it reads AWYSRTERGGWWALWNTA. A helical membrane pass occupies residues 163 to 183; sequence HNVGGALIPIVMAAAALHYGW. Position 184 (arginine 184) is a topological domain, periplasmic. The helical transmembrane segment at 185–205 threads the bilayer; the sequence is AGMMIAGCMAIVVGIFLCWRL. Residues 206–244 are Cytoplasmic-facing; that stretch reads RDRPQALGLPAVGEWRHDALEIAQQQEGAGLTRKEILTK. Residues 245-265 form a helical membrane-spanning segment; sequence YVLLNPYIWLLSFCYVLVYVV. Residues 266–289 are Periplasmic-facing; that stretch reads RAAINDWGNLYMSETLGVDLVTAN. A helical transmembrane segment spans residues 290 to 310; it reads TAVTMFELGGFIGALVAGWGS. At 311 to 322 the chain is on the cytoplasmic side; sequence DKLFNGNRGPMN. A helical transmembrane segment spans residues 323-343; the sequence is LIFAAGILLSVGSLWLMPFAS. At 344-349 the chain is on the periplasmic side; that stretch reads YVMQAT. The helical transmembrane segment at 350–370 threads the bilayer; it reads CFFTIGFFVFGPQMLIGMAAA. Over 371 to 379 the chain is Cytoplasmic; sequence ECSHKEAAG. Residues 380–400 form a helical membrane-spanning segment; it reads AATGFVGLFAYLGASLAGWPL. Residues 401–410 are Periplasmic-facing; it reads AKVLDTWHWS. A helical transmembrane segment spans residues 411–431; that stretch reads GFFVVISIAAGISALLLLPFL. The Cytoplasmic portion of the chain corresponds to 432–439; that stretch reads NAQTPREA.

It belongs to the major facilitator superfamily. Organophosphate:Pi antiporter (OPA) (TC 2.A.1.4) family.

It is found in the cell inner membrane. In terms of biological role, part of the UhpABC signaling cascade that controls the expression of the hexose phosphate transporter UhpT. UhpC senses external glucose-6-phosphate and interacts with the histidine kinase UhpB, leading to the stimulation of the autokinase activity of UhpB. In Escherichia coli (strain K12), this protein is Membrane sensor protein UhpC.